The chain runs to 237 residues: 2-C-methyl-D-erythritol 4-phosphate cytidylyltransferase (237 aa).

This sequence belongs to the IspD/TarI cytidylyltransferase family. IspD subfamily.

It catalyses the reaction 2-C-methyl-D-erythritol 4-phosphate + CTP + H(+) = 4-CDP-2-C-methyl-D-erythritol + diphosphate. The protein operates within isoprenoid biosynthesis; isopentenyl diphosphate biosynthesis via DXP pathway; isopentenyl diphosphate from 1-deoxy-D-xylulose 5-phosphate: step 2/6. In terms of biological role, catalyzes the formation of 4-diphosphocytidyl-2-C-methyl-D-erythritol from CTP and 2-C-methyl-D-erythritol 4-phosphate (MEP). The polypeptide is 2-C-methyl-D-erythritol 4-phosphate cytidylyltransferase (Vibrio vulnificus (strain YJ016)).